The primary structure comprises 186 residues: ATP synthase subunit delta (186 aa).

It belongs to the ATPase delta chain family. As to quaternary structure, F-type ATPases have 2 components, F(1) - the catalytic core - and F(0) - the membrane proton channel. F(1) has five subunits: alpha(3), beta(3), gamma(1), delta(1), epsilon(1). F(0) has three main subunits: a(1), b(2) and c(10-14). The alpha and beta chains form an alternating ring which encloses part of the gamma chain. F(1) is attached to F(0) by a central stalk formed by the gamma and epsilon chains, while a peripheral stalk is formed by the delta and b chains.

The protein localises to the cell membrane. In terms of biological role, f(1)F(0) ATP synthase produces ATP from ADP in the presence of a proton or sodium gradient. F-type ATPases consist of two structural domains, F(1) containing the extramembraneous catalytic core and F(0) containing the membrane proton channel, linked together by a central stalk and a peripheral stalk. During catalysis, ATP synthesis in the catalytic domain of F(1) is coupled via a rotary mechanism of the central stalk subunits to proton translocation. Functionally, this protein is part of the stalk that links CF(0) to CF(1). It either transmits conformational changes from CF(0) to CF(1) or is implicated in proton conduction. The polypeptide is ATP synthase subunit delta (Wolbachia pipientis wMel).